A 177-amino-acid polypeptide reads, in one-letter code: Peptide methionine sulfoxide reductase MsrA (177 aa).

Cysteine 15 is an active-site residue.

This sequence belongs to the MsrA Met sulfoxide reductase family.

The enzyme catalyses L-methionyl-[protein] + [thioredoxin]-disulfide + H2O = L-methionyl-(S)-S-oxide-[protein] + [thioredoxin]-dithiol. It carries out the reaction [thioredoxin]-disulfide + L-methionine + H2O = L-methionine (S)-S-oxide + [thioredoxin]-dithiol. In terms of biological role, has an important function as a repair enzyme for proteins that have been inactivated by oxidation. Catalyzes the reversible oxidation-reduction of methionine sulfoxide in proteins to methionine. The protein is Peptide methionine sulfoxide reductase MsrA of Listeria monocytogenes serotype 4b (strain CLIP80459).